A 940-amino-acid chain; its full sequence is Gamma-aminobutyric acid type B receptor subunit 2 (940 aa).

The N-terminal stretch at 1-40 (MASPPSSGQPRPPPPPPPPARLLLPLLLSLLLWLAPGAWG) is a signal peptide. Topologically, residues 41–482 (WTRGAPRPPP…LRKISLPLYS (442 aa)) are extracellular. Asn89 is a glycosylation site (N-linked (GlcNAc...) asparagine). Intrachain disulfides connect Cys107/Cys134, Cys236/Cys265, and Cys264/Cys301. Residues Asn297, Asn388, Asn403, and Asn452 are each glycosylated (N-linked (GlcNAc...) asparagine). A helical transmembrane segment spans residues 483–503 (ILSALTILGMIMASAFLFFNI). The Cytoplasmic portion of the chain corresponds to 504–521 (KNRNQKLIKMSSPYMNNL). Residues 522–542 (IILGGMLSYASIFLFGLDGSF) form a helical membrane-spanning segment. The Extracellular portion of the chain corresponds to 543–550 (VSEKTFET). Residues 551–571 (LCTVRTWILTVGYTTAFGAMF) form a helical membrane-spanning segment. The Cytoplasmic segment spans residues 572 to 596 (AKTWRVHAIFKNVKMKKKIIKDQKL). Residues 597–617 (LVIVGGMLLIDLCILICWQAV) form a helical membrane-spanning segment. Residues 618 to 653 (DPLRRTVERYSMEPDPAGRDISIRPLLEHCENTHMT) lie on the Extracellular side of the membrane. A helical transmembrane segment spans residues 654 to 674 (IWLGIVYAYKGLLMLFGCFLA). Topologically, residues 675–690 (WETRNVSIPALNDSKY) are cytoplasmic. Residues 691 to 711 (IGMSVYNVGIMCIIGAAVSFL) traverse the membrane as a helical segment. Over 712-719 (TRDQPNVQ) the chain is Extracellular. The chain crosses the membrane as a helical span at residues 720–740 (FCIVALVIIFCSTITLCLVFV). Topologically, residues 741–940 (PKLITLRTNP…PSFRVMVSGL (200 aa)) are cytoplasmic. A disordered region spans residues 762–789 (TQNQKKEDSKTSTSVTSVNQASTSRLEG). Residues 772-786 (TSTSVTSVNQASTSR) show a composition bias toward polar residues. A phosphoserine mark is found at Ser775 and Ser778. Positions 780 to 818 (NQASTSRLEGLQSENHRLRMKITELDKDLEEVTMQLQDT) form a coiled coil. A Phosphothreonine modification is found at Thr818. Residues Ser883, Ser892, Ser912, Ser915, Ser919, and Ser923 each carry the phosphoserine modification.

The protein belongs to the G-protein coupled receptor 3 family. GABA-B receptor subfamily. In terms of assembly, heterodimer of GABBR1 and GABBR2. Homodimers may form, but are inactive. Interacts (via C-terminus) with ATF4 (via leucine zipper domain). Interacts with KCTD8, KCTD12 and KCTD16; this interaction determines the pharmacology and kinetics of the receptor response, the KCTD proteins markedly accelerating the GABA-B response, although to different extents. Highly expressed in areas of the brain including thalamic nuclei, the hippocampus, cerebellar Purkinje cells and the medial habenula, and moderately expressed in the cerebral cortex, certain anterioventral thalamic nuclei, dorsal medial hypothalamic nucleus and suprachiasmatic nuclei. Also weakly expressed in the testis.

It is found in the cell membrane. The protein localises to the postsynaptic cell membrane. Its subcellular location is the perikaryon. It localises to the cell projection. The protein resides in the dendrite. Functionally, component of a heterodimeric G-protein coupled receptor for GABA, formed by GABBR1 and GABBR2. Within the heterodimeric GABA receptor, only GABBR1 seems to bind agonists, while GABBR2 mediates coupling to G proteins. Ligand binding causes a conformation change that triggers signaling via guanine nucleotide-binding proteins (G proteins) and modulates the activity of down-stream effectors, such as adenylate cyclase. Signaling inhibits adenylate cyclase, stimulates phospholipase A2, activates potassium channels, inactivates voltage-dependent calcium-channels and modulates inositol phospholipid hydrolysis. Plays a critical role in the fine-tuning of inhibitory synaptic transmission. Pre-synaptic GABA receptor inhibits neurotransmitter release by down-regulating high-voltage activated calcium channels, whereas postsynaptic GABA receptor decreases neuronal excitability by activating a prominent inwardly rectifying potassium (Kir) conductance that underlies the late inhibitory postsynaptic potentials. Not only implicated in synaptic inhibition but also in hippocampal long-term potentiation, slow wave sleep, muscle relaxation and antinociception. The chain is Gamma-aminobutyric acid type B receptor subunit 2 (Gabbr2) from Rattus norvegicus (Rat).